The chain runs to 506 residues: Cobyric acid synthase (506 aa).

Positions 251 to 448 (DITIAIVQLP…LHGLFDSDAF (198 aa)) constitute a GATase cobBQ-type domain. Catalysis depends on cysteine 332, which acts as the Nucleophile. Residue histidine 440 is part of the active site.

The protein belongs to the CobB/CobQ family. CobQ subfamily.

It functions in the pathway cofactor biosynthesis; adenosylcobalamin biosynthesis. Its function is as follows. Catalyzes amidations at positions B, D, E, and G on adenosylcobyrinic A,C-diamide. NH(2) groups are provided by glutamine, and one molecule of ATP is hydrogenolyzed for each amidation. This chain is Cobyric acid synthase, found in Salmonella heidelberg (strain SL476).